The following is a 503-amino-acid chain: Transcriptional regulator LovE (503 aa).

Positions 1 to 14 (MAADQGTFTTSVTL) are enriched in polar residues. The interval 1 to 21 (MAADQGTFTTSVTLSPVEGSR) is disordered. Positions 35-67 (CDRCHAQKIKCTGNKEVTARAPCQRCQQAGLRC) form a DNA-binding region, zn(2)-C6 fungal-type. Disordered stretches follow at residues 89-124 (ADPD…RQFL) and 331-362 (SHMN…DTIP). Over residues 339–349 (SRSESPSRDDT) the composition is skewed to basic and acidic residues. The span at 350 to 359 (SSTSGHSSVD) shows a compositional bias: polar residues.

It localises to the nucleus. Its function is as follows. Transcription factor that regulates the expression of the he gene cluster that mediates the biosynthesis of lovastatin (also known as mevinolin, mevacor or monacolin K), a hypolipidemic inhibitor of (3S)-hydroxymethylglutaryl-coenzyme A (HMG-CoA) reductase (HMGR). The protein is Transcriptional regulator LovE of Aspergillus terreus (strain NIH 2624 / FGSC A1156).